Consider the following 280-residue polypeptide: Mitochondrial outer membrane protein porin 2 (280 aa).

The protein belongs to the eukaryotic mitochondrial porin (TC 1.B.8.1) family. Expressed in roots, stems, leaves, palea, lemma and pollen.

It localises to the mitochondrion outer membrane. Its function is as follows. Forms a channel through the mitochondrial outer membrane that allows diffusion of small hydrophilic molecules. The channel adopts an open conformation at low or zero membrane potential and a closed conformation at potentials above 30-40 mV. The open state has a weak anion selectivity whereas the closed state is cation-selective. The protein is Mitochondrial outer membrane protein porin 2 (VDAC2) of Oryza sativa subsp. japonica (Rice).